Here is a 251-residue protein sequence, read N- to C-terminus: Pyrroloquinoline-quinone synthase (251 aa).

It belongs to the PqqC family.

The enzyme catalyses 6-(2-amino-2-carboxyethyl)-7,8-dioxo-1,2,3,4,7,8-hexahydroquinoline-2,4-dicarboxylate + 3 O2 = pyrroloquinoline quinone + 2 H2O2 + 2 H2O + H(+). The protein operates within cofactor biosynthesis; pyrroloquinoline quinone biosynthesis. Its function is as follows. Ring cyclization and eight-electron oxidation of 3a-(2-amino-2-carboxyethyl)-4,5-dioxo-4,5,6,7,8,9-hexahydroquinoline-7,9-dicarboxylic-acid to PQQ. The protein is Pyrroloquinoline-quinone synthase of Pseudomonas syringae pv. syringae (strain B728a).